Here is a 234-residue protein sequence, read N- to C-terminus: N-acetyl-alpha-D-glucosaminyl L-malate deacetylase 1 (234 aa).

Residues His12, Asp15, and His113 each coordinate Zn(2+).

It belongs to the PIGL family. Zn(2+) is required as a cofactor.

It catalyses the reaction (S)-malyl N-acetyl-alpha-D-glucosaminide + H2O = (S)-malyl alpha-D-glucosaminide + acetate. With respect to regulation, inhibited by BSH. Functionally, involved in bacillithiol (BSH) biosynthesis. Catalyzes the second step of the pathway, the deacetylation of N-acetylglucosaminylmalate (GlcNAc-Mal) to glucosamine malate (GlcN-Mal). The sequence is that of N-acetyl-alpha-D-glucosaminyl L-malate deacetylase 1 from Bacillus anthracis.